Reading from the N-terminus, the 162-residue chain is Succinate dehydrogenase assembly factor 2, mitochondrial (162 aa).

Residues 1 to 35 (MHNMFPALTKTLSLQGYKIINSQTGSAAWSCGRRW) constitute a mitochondrion transit peptide.

The protein belongs to the SDHAF2 family. Interacts with SDH1 within the SDH catalytic dimer.

The protein localises to the mitochondrion matrix. Plays an essential role in the assembly of succinate dehydrogenase (SDH), an enzyme complex (also referred to as respiratory complex II) that is a component of both the tricarboxylic acid (TCA) cycle and the mitochondrial electron transport chain, and which couples the oxidation of succinate to fumarate with the reduction of ubiquinone (coenzyme Q) to ubiquinol. Required for flavinylation (covalent attachment of FAD) of the flavoprotein subunit SDH1 of the SDH catalytic dimer. It is unclear whether it participates in the chemistry of FAD attachment (enzymatic function) or acts as a chaperone that maintains SDH1 in a conformation that is susceptible to autocatalytic FAD attachment. Does not bind FAD or FADH(2) in vitro. Involved in sporulation. Required for the full activation of the early meiotic inducer IME1. The chain is Succinate dehydrogenase assembly factor 2, mitochondrial from Saccharomyces cerevisiae (strain ATCC 204508 / S288c) (Baker's yeast).